Here is a 248-residue protein sequence, read N- to C-terminus: Acyl-coenzyme A thioesterase THEM5 (248 aa).

The Proton donor/acceptor role is filled by Asp167.

It belongs to the THEM4/THEM5 thioesterase family. In terms of assembly, homodimer.

It is found in the mitochondrion matrix. The enzyme catalyses hexadecanoyl-CoA + H2O = hexadecanoate + CoA + H(+). It carries out the reaction (9Z,12Z)-octadecadienoyl-CoA + H2O = (9Z,12Z)-octadecadienoate + CoA + H(+). It catalyses the reaction tetradecanoyl-CoA + H2O = tetradecanoate + CoA + H(+). The catalysed reaction is (9Z)-octadecenoyl-CoA + H2O = (9Z)-octadecenoate + CoA + H(+). The enzyme catalyses (9Z)-hexadecenoyl-CoA + H2O = (9Z)-hexadecenoate + CoA + H(+). It carries out the reaction (5Z,8Z,11Z,14Z)-eicosatetraenoyl-CoA + H2O = (5Z,8Z,11Z,14Z)-eicosatetraenoate + CoA + H(+). It catalyses the reaction octadecanoyl-CoA + H2O = octadecanoate + CoA + H(+). Functionally, has acyl-CoA thioesterase activity towards long-chain (C16 and C18) fatty acyl-CoA substrates, with a preference for linoleoyl-CoA and other unsaturated long-chain fatty acid-CoA esters. Plays an important role in mitochondrial fatty acid metabolism, and in remodeling of the mitochondrial lipid cardiolipin. Required for normal mitochondrial function. The protein is Acyl-coenzyme A thioesterase THEM5 (Them5) of Mus musculus (Mouse).